Here is a 450-residue protein sequence, read N- to C-terminus: Tubulin alpha-1 chain (450 aa).

Residue Gln11 participates in GTP binding. Lys40 carries the N6-acetyllysine modification. GTP contacts are provided by Glu71, Ser140, Gly144, Thr145, Thr179, Asn206, and Asn228. A Mg(2+)-binding site is contributed by Glu71. Glu254 is an active-site residue.

Belongs to the tubulin family. In terms of assembly, dimer of alpha and beta chains. A typical microtubule is a hollow water-filled tube with an outer diameter of 25 nm and an inner diameter of 15 nM. Alpha-beta heterodimers associate head-to-tail to form protofilaments running lengthwise along the microtubule wall with the beta-tubulin subunit facing the microtubule plus end conferring a structural polarity. Microtubules usually have 13 protofilaments but different protofilament numbers can be found in some organisms and specialized cells. Interacts with Ote. It depends on Mg(2+) as a cofactor. In terms of processing, undergoes a tyrosination/detyrosination cycle, the cyclic removal and re-addition of a C-terminal tyrosine residue by the enzymes tubulin tyrosine carboxypeptidase (TTCP) and tubulin tyrosine ligase (TTL), respectively. Acetylation of alpha chains at Lys-40 stabilizes microtubules and affects affinity and processivity of microtubule motors. This modification has a role in multiple cellular functions, ranging from cell motility, cell cycle progression or cell differentiation to intracellular trafficking and signaling. During the early stages of oogenesis lky/Alpha-tubulin N-acetyltransferase 2 is the main acetyltransferase responsible for Lys-40 acetylation in germline cells while Atat/alpha-tubulin N-acetyltransferase 1 is the main acetyltransferase responsible for Lys-40 acetylation in somatic cells.

The protein localises to the cytoplasm. The protein resides in the cytoskeleton. The enzyme catalyses GTP + H2O = GDP + phosphate + H(+). Tubulin is the major constituent of microtubules, a cylinder consisting of laterally associated linear protofilaments composed of alpha- and beta-tubulin heterodimers. Microtubules grow by the addition of GTP-tubulin dimers to the microtubule end, where a stabilizing cap forms. Below the cap, tubulin dimers are in GDP-bound state, owing to GTPase activity of alpha-tubulin. In Drosophila melanogaster (Fruit fly), this protein is Tubulin alpha-1 chain (alphaTub84B).